The sequence spans 95 residues: Defensin-1 (95 aa).

The first 19 residues, 1–19, serve as a signal peptide directing secretion; it reads MKIYFIVGLLFMAMVAIMA. A propeptide spanning residues 20-43 is cleaved from the precursor; the sequence is APVEDEFEPLEHFENEERADRHRR. 3 disulfides stabilise this stretch: Cys46/Cys74, Cys60/Cys79, and Cys64/Cys81. A Phenylalanine amide modification is found at Phe94.

Its subcellular location is the secreted. Functionally, found in royal jelly and in hemolymph, potent antibacterial protein against Gram-positive bacteria at low concentration. This Apis mellifera carnica (Carniolan honeybee) protein is Defensin-1.